Consider the following 524-residue polypeptide: Protein-export membrane protein SecD (524 aa).

A run of 6 helical transmembrane segments spans residues 10–30 (VIFL…PTMG), 366–386 (KFDS…VVFI), 389–409 (GKPQ…YILL), 420–442 (DLSV…IIIA), 465–485 (FWVI…LAVL), and 487–507 (LGDL…GVLV).

It belongs to the SecD/SecF family. SecD subfamily. Part of the protein translocation apparatus. Forms a homodimer and complexes with SecF.

The protein localises to the cell membrane. Functionally, involved in protein export. This is Protein-export membrane protein SecD from Haloferax volcanii (strain ATCC 29605 / DSM 3757 / JCM 8879 / NBRC 14742 / NCIMB 2012 / VKM B-1768 / DS2) (Halobacterium volcanii).